The following is a 290-amino-acid chain: Ribosomal RNA small subunit methyltransferase A (290 aa).

Positions 27, 29, 54, 75, 100, and 125 each coordinate S-adenosyl-L-methionine.

This sequence belongs to the class I-like SAM-binding methyltransferase superfamily. rRNA adenine N(6)-methyltransferase family. RsmA subfamily.

It is found in the cytoplasm. It catalyses the reaction adenosine(1518)/adenosine(1519) in 16S rRNA + 4 S-adenosyl-L-methionine = N(6)-dimethyladenosine(1518)/N(6)-dimethyladenosine(1519) in 16S rRNA + 4 S-adenosyl-L-homocysteine + 4 H(+). Specifically dimethylates two adjacent adenosines (A1518 and A1519) in the loop of a conserved hairpin near the 3'-end of 16S rRNA in the 30S particle. May play a critical role in biogenesis of 30S subunits. This is Ribosomal RNA small subunit methyltransferase A from Streptococcus gordonii (strain Challis / ATCC 35105 / BCRC 15272 / CH1 / DL1 / V288).